The chain runs to 945 residues: MALKSPAFRKKFPLLVTGSLLALQPLATSFVVAAEQYDCSVSASGGWACAPKTSAAQLPPRPVHDANSVSSSVATAADATGEEASGDKSKLVTEAKGRGLKSRSADYSHLDWVPREKLTAAQLAETGPYCSGSYIEPIRPGMNDKTNKSDAPTFIGAKASRYQQEEQVATLAGDVVMRQGSMQVEADEASLYQAENRGELSGNVRVRDNGALLVGDHADIQLDTGEAKVDNAEYVLHKSRVRGNALYAKRAENAIIRLKDGTYTTCEPNSNAWQLKGNNITLNPATGFGTATNVTLRVKDIPVLYTPYIYFPIDDRRQSGFLPPSFSTGSDTGFMLVTPYYFNLAPNYDATLYPRYMAKRGLLMEGEFRYLTKSSEGQFGAAYLNDDDTDRKKQTDYEKTRYMLNWQHKGGLDSRLMTEVDYTKISDPYYFQDLQTDQIGVKATDYVNQQGVVTYRGDDYTARLNVQAYELASVANITPYNKLPQITFNGALPYHPQGLDFTYETELVRFDRDLLTGNYTDKDGGPIDPVTGAVGTRRLDTNVAGLARANGDRLNLKPGVSLPLNWSYGYLTPSLKYMYTQYNLDLDGTGKEGIVAARNYATATGTRYVGGDYSRNQNRGVPIASLDGGLYFDRNTQWFGKNYRQTLEPRAFYLYVPEEDQKDIPVFDTGEPTFNYASLFRDNRFSGSDRVGDENKLSLGVTSRWIEDNGFQRQRISVGQALYFKDRTVQLPGIDYRTRADATSNVSPYALEYEYRYNRDWRATADYNWDPDSHSARSGSAMFHYQPEDNPNKVVNAGYRYRNDQIRYDQNSGTWKMGGDYGTPGQPGYVKDYYKIQQHDFSVIWPIVPQWNAISRWQYDYNRNRTLEAFGGFEYDNCCWKLRLISRYWVKYDEFSQNAPENEKGDRGIFLQIVLKGLGGVMGTKVESFLDKGIQGYREREDQAF.

The N-terminal stretch at 1-33 is a signal peptide; the sequence is MALKSPAFRKKFPLLVTGSLLALQPLATSFVVA. The segment at 56 to 98 is disordered; sequence AQLPPRPVHDANSVSSSVATAADATGEEASGDKSKLVTEAKGR. Positions 65-79 are enriched in low complexity; that stretch reads DANSVSSSVATAADA. Residues 85–98 are compositionally biased toward basic and acidic residues; the sequence is SGDKSKLVTEAKGR.

The protein belongs to the LptD family. As to quaternary structure, component of the lipopolysaccharide transport and assembly complex. Interacts with LptE and LptA.

The protein localises to the cell outer membrane. In terms of biological role, together with LptE, is involved in the assembly of lipopolysaccharide (LPS) at the surface of the outer membrane. This chain is LPS-assembly protein LptD, found in Pseudomonas fluorescens (strain ATCC BAA-477 / NRRL B-23932 / Pf-5).